A 54-amino-acid chain; its full sequence is Salt stress-induced hydrophobic peptide ESI3 (54 aa).

Helical transmembrane passes span 2–22 and 34–54; these read GSAT…GVFL and LLLT…VLVV.

The protein belongs to the UPF0057 (PMP3) family.

The protein resides in the membrane. This is Salt stress-induced hydrophobic peptide ESI3 (ESI3) from Thinopyrum elongatum (Tall wheatgrass).